A 306-amino-acid chain; its full sequence is MEPGSMENLSIVYQSSDFLVVNKHWDLRIDSKTWRETLTLQKQLRHHFPELADPDTCYGFRFCHQLDFSTSGALCVALNKAAAGSAYKCFKERRVTKAYLALVRGHVQESQVTINYAIGRNSTEGRTHTMCIEGTHGCENPKPSLTELLVLEHGLYAGDPVSKVLLKPLTGRTHQLRVHCSALGHPIVGDLTYGQAEDQEDQPFRMMLHAFYLRIPTQAERVEACTPDPFLPALDACWSPSTCVQPLEQLIQALRTDPDPDPMSGGPRPCSPSTPQPRPGRPPPETEAQRASCLQWLSEWTLEPDN.

At M1 the chain carries N-acetylmethionine. Residue D67 is part of the active site. The segment at R255–R290 is disordered. The segment covering P269–E285 has biased composition (pro residues).

It belongs to the pseudouridine synthase RluA family.

This Mus musculus (Mouse) protein is RNA pseudouridylate synthase domain-containing protein 1 (Rpusd1).